The primary structure comprises 315 residues: Salivary protein SG34 (315 aa).

An N-terminal signal peptide occupies residues 1–20; it reads MPVSYDFVILLALFIVLARS. A coiled-coil region spans residues 98–161; the sequence is NAEVELLRES…QEEIEQQTKQ (64 aa).

Functionally, (Microbial infection) Modulates replication of duck Tembusu virus in salivary glands and virus release into the saliva, probably via the regulation of antimicrobial peptides expression in response to duck Tembusu virus infection. In Aedes albopictus (Asian tiger mosquito), this protein is Salivary protein SG34.